Consider the following 505-residue polypeptide: Protein DETOXIFICATION 50 (505 aa).

Transmembrane regions (helical) follow at residues leucine 46–glycine 66, alanine 78–glutamate 98, isoleucine 121–isoleucine 141, alanine 155–leucine 175, isoleucine 194–isoleucine 214, leucine 219–phenylalanine 239, isoleucine 275–leucine 295, glycine 305–valine 325, alanine 344–valine 364, isoleucine 380–proline 400, alanine 424–phenylalanine 444, and glycine 446–threonine 466.

The protein belongs to the multi antimicrobial extrusion (MATE) (TC 2.A.66.1) family. As to expression, preferentially expressed in rosette leaves. Detected mainly in the vascular tissues and guard cells. Mostly detected at reproductive stages in young anthers, in mature pollens and during pollen germination on the pistil. Also expressed in developing seeds.

It localises to the cell membrane. The protein localises to the late endosome membrane. Its function is as follows. Functions as a multidrug and toxin extrusion transporter in the export of abscisic acid (ABA) in guard cells. Plays a role in ABA-mediated growth inhibition and responses to drought conditions. May act as a negative regulator of hypocotyl cell elongation in the light. In Arabidopsis thaliana (Mouse-ear cress), this protein is Protein DETOXIFICATION 50.